Here is a 346-residue protein sequence, read N- to C-terminus: Ketol-acid reductoisomerase (NADP(+)) (346 aa).

One can recognise a KARI N-terminal Rossmann domain in the interval 1–189; the sequence is MQVYYDRDAD…GGGRSGIIET (189 aa). Residues 24 to 27, Arg-48, Ser-51, Thr-53, and 83 to 86 contribute to the NADP(+) site; these read YGSQ and DEHQ. His-108 is a catalytic residue. NADP(+) is bound at residue Gly-134. The region spanning 190–335 is the KARI C-terminal knotted domain; that stretch reads TFKEECETDL…EKLRAMMPWI (146 aa). 4 residues coordinate Mg(2+): Asp-198, Glu-202, Glu-234, and Glu-238. Ser-259 contributes to the substrate binding site.

It belongs to the ketol-acid reductoisomerase family. Requires Mg(2+) as cofactor.

It carries out the reaction (2R)-2,3-dihydroxy-3-methylbutanoate + NADP(+) = (2S)-2-acetolactate + NADPH + H(+). The catalysed reaction is (2R,3R)-2,3-dihydroxy-3-methylpentanoate + NADP(+) = (S)-2-ethyl-2-hydroxy-3-oxobutanoate + NADPH + H(+). The protein operates within amino-acid biosynthesis; L-isoleucine biosynthesis; L-isoleucine from 2-oxobutanoate: step 2/4. It participates in amino-acid biosynthesis; L-valine biosynthesis; L-valine from pyruvate: step 2/4. Functionally, involved in the biosynthesis of branched-chain amino acids (BCAA). Catalyzes an alkyl-migration followed by a ketol-acid reduction of (S)-2-acetolactate (S2AL) to yield (R)-2,3-dihydroxy-isovalerate. In the isomerase reaction, S2AL is rearranged via a Mg-dependent methyl migration to produce 3-hydroxy-3-methyl-2-ketobutyrate (HMKB). In the reductase reaction, this 2-ketoacid undergoes a metal-dependent reduction by NADPH to yield (R)-2,3-dihydroxy-isovalerate. This is Ketol-acid reductoisomerase (NADP(+)) from Sphingopyxis alaskensis (strain DSM 13593 / LMG 18877 / RB2256) (Sphingomonas alaskensis).